Consider the following 463-residue polypeptide: V-type ATP synthase beta chain (463 aa).

The protein belongs to the ATPase alpha/beta chains family.

In terms of biological role, produces ATP from ADP in the presence of a proton gradient across the membrane. The V-type beta chain is a regulatory subunit. The polypeptide is V-type ATP synthase beta chain (Halothermothrix orenii (strain H 168 / OCM 544 / DSM 9562)).